The following is a 308-amino-acid chain: S-crystallin SL18 (308 aa).

Residues 2–80 (PKYTLYYFNS…YLARQFGFYG (79 aa)) enclose the GST N-terminal domain. The segment at 165 to 205 (EMRSQDSMVEPPSQKLSPELESQSSLCSERPQCGPPDPMMG) is disordered. Residues 178–191 (QKLSPELESQSSLC) show a composition bias toward polar residues. Positions 185–308 (ESQSSLCSER…YFTLRNYTDF (124 aa)) constitute a GST C-terminal domain.

Belongs to the GST superfamily. In terms of tissue distribution, lens.

Its function is as follows. S-crystallins are structural components of squids and octopi eye lens. Contains relatively little if any GST activity. In Nototodarus sloanii (Wellington flying squid), this protein is S-crystallin SL18.